Here is a 147-residue protein sequence, read N- to C-terminus: uncharacterized protein (147 aa).

Positions 1 to 137 constitute an HTH marR-type domain; sequence MRDNTIGSLI…LYELMTKVHK (137 aa). The H-T-H motif DNA-binding region spans 53–76; sequence QMELAEKVTVTQGGISRMLTRLEK.

This is an uncharacterized protein from Bacillus anthracis.